Here is a 519-residue protein sequence, read N- to C-terminus: 6-phosphofructo-2-kinase/fructose-2,6-bisphosphatase 2 (519 aa).

The segment covering 1 to 17 has biased composition (polar residues); that stretch reads MSENSTFSTEDSCNSSY. Positions 1–22 are disordered; sequence MSENSTFSTEDSCNSSYKPHAS. Ser-2 bears the N-acetylserine mark. Positions 2–251 are 6-phosphofructo-2-kinase; sequence SENSTFSTED…VYYLMNIHVH (250 aa). Ser-32 is subject to Phosphoserine; by PKA. 48 to 56 contacts ATP; it reads GLPARGKTY. Residues Arg-81 and Arg-105 each coordinate beta-D-fructose 6-phosphate. Residue Asp-131 is part of the active site. Beta-D-fructose 6-phosphate-binding residues include Thr-133 and Arg-139. Cys-161 is an active-site residue. Residue 170 to 175 participates in ATP binding; that stretch reads NILEVK. 3 residues coordinate beta-D-fructose 6-phosphate: Lys-175, Arg-196, and Tyr-200. The segment at 252–519 is fructose-2,6-bisphosphatase; it reads PRTIYLCRHG…PKTQVSIPVV (268 aa). Residue Arg-259 coordinates beta-D-fructose 2,6-bisphosphate. The Tele-phosphohistidine intermediate role is filled by His-260. 2 residues coordinate beta-D-fructose 2,6-bisphosphate: Asn-266 and Gly-272. Glu-329 functions as the Proton donor/acceptor in the catalytic mechanism. Residues Tyr-340, Arg-354, Lys-358, Tyr-369, Gln-395, and Arg-399 each coordinate beta-D-fructose 2,6-bisphosphate. An ATP-binding site is contributed by 351-354; that stretch reads FALR. ATP contacts are provided by residues 395 to 399 and Tyr-431; that span reads QAVMR. The tract at residues 448–493 is disordered; sequence HRDKPTHNFPKSQTPVRMRRNSFTPLSSSNTIRRPRNYSVGSRPLK. Polar residues predominate over residues 456–479; sequence FPKSQTPVRMRRNSFTPLSSSNTI. Ser-469 is subject to Phosphoserine. Thr-471 carries the phosphothreonine modification. Position 478 is a phosphothreonine; by PKC (Thr-478). 2 positions are modified to phosphoserine: Ser-486 and Ser-496. Residues 500–519 form a disordered region; sequence ALDMQEGADQPKTQVSIPVV. A compositionally biased stretch (polar residues) spans 510-519; that stretch reads PKTQVSIPVV.

It in the C-terminal section; belongs to the phosphoglycerate mutase family. In terms of assembly, homodimer. Forms a heterodimer with PFKFB3. In terms of processing, phosphorylation by AMPK stimulates activity. Highest levels in kidney; also found in heart, brain, spleen, lung, liver, skeletal muscle and testis.

The catalysed reaction is beta-D-fructose 2,6-bisphosphate + H2O = beta-D-fructose 6-phosphate + phosphate. The enzyme catalyses beta-D-fructose 6-phosphate + ATP = beta-D-fructose 2,6-bisphosphate + ADP + H(+). Phosphorylation results in the activation of the kinase activity. In terms of biological role, synthesis and degradation of fructose 2,6-bisphosphate. This chain is 6-phosphofructo-2-kinase/fructose-2,6-bisphosphatase 2 (Pfkfb2), found in Mus musculus (Mouse).